The chain runs to 151 residues: Deoxyuridine 5'-triphosphate nucleotidohydrolase (151 aa).

Substrate-binding positions include 70 to 72 (RSG), Asn83, 87 to 89 (LID), and Met97.

This sequence belongs to the dUTPase family. Mg(2+) is required as a cofactor.

It catalyses the reaction dUTP + H2O = dUMP + diphosphate + H(+). The protein operates within pyrimidine metabolism; dUMP biosynthesis; dUMP from dCTP (dUTP route): step 2/2. In terms of biological role, this enzyme is involved in nucleotide metabolism: it produces dUMP, the immediate precursor of thymidine nucleotides and it decreases the intracellular concentration of dUTP so that uracil cannot be incorporated into DNA. This Pseudomonas aeruginosa (strain LESB58) protein is Deoxyuridine 5'-triphosphate nucleotidohydrolase.